Consider the following 688-residue polypeptide: Potassium-transporting ATPase ATP-binding subunit (688 aa).

Transmembrane regions (helical) follow at residues 34-54 (PVMF…LAIL), 62-82 (AMFT…ANMA), 219-239 (VALT…TATL), and 260-280 (VLVA…LSAI). The 4-aspartylphosphate intermediate role is filled by D313. Residues D350, E354, 383 to 390 (FSAQTRMS), and K401 each bind ATP. Residues D524 and D528 each contribute to the Mg(2+) site. 3 consecutive transmembrane segments (helical) span residues 594–614 (FAII…LNIM), 622–642 (AILS…PLAL), and 662–682 (IYGL…DLLL).

The protein belongs to the cation transport ATPase (P-type) (TC 3.A.3) family. Type IA subfamily. The system is composed of three essential subunits: KdpA, KdpB and KdpC.

It is found in the cell inner membrane. The enzyme catalyses K(+)(out) + ATP + H2O = K(+)(in) + ADP + phosphate + H(+). Part of the high-affinity ATP-driven potassium transport (or Kdp) system, which catalyzes the hydrolysis of ATP coupled with the electrogenic transport of potassium into the cytoplasm. This subunit is responsible for energy coupling to the transport system and for the release of the potassium ions to the cytoplasm. The polypeptide is Potassium-transporting ATPase ATP-binding subunit (Yersinia pseudotuberculosis serotype I (strain IP32953)).